Reading from the N-terminus, the 402-residue chain is D-galactonate dehydratase family member RspA (402 aa).

Substrate contacts are provided by N37 and H122. The active-site Proton donor/acceptor is Y159. A Mg(2+)-binding site is contributed by D210. H212 acts as the Proton donor/acceptor in catalysis. 2 residues coordinate Mg(2+): E236 and E262. The substrate site is built by E262, R283, H312, D316, and E339.

Belongs to the mandelate racemase/muconate lactonizing enzyme family. GalD subfamily. It depends on Mg(2+) as a cofactor.

It catalyses the reaction D-mannonate = 2-dehydro-3-deoxy-D-gluconate + H2O. Functionally, has low D-mannonate dehydratase activity (in vitro), suggesting that this is not a physiological substrate and that it has no significant role in D-mannonate degradation in vivo. Has no detectable activity with a panel of 70 other acid sugars (in vitro). This Cellvibrio japonicus (strain Ueda107) (Pseudomonas fluorescens subsp. cellulosa) protein is D-galactonate dehydratase family member RspA (rspA).